Reading from the N-terminus, the 200-residue chain is Probable molybdenum cofactor guanylyltransferase (200 aa).

Residues 9–11 (LAG), K21, D69, and D100 contribute to the GTP site. Position 100 (D100) interacts with Mg(2+).

This sequence belongs to the MobA family. The cofactor is Mg(2+).

The protein resides in the cytoplasm. The enzyme catalyses Mo-molybdopterin + GTP + H(+) = Mo-molybdopterin guanine dinucleotide + diphosphate. Transfers a GMP moiety from GTP to Mo-molybdopterin (Mo-MPT) cofactor (Moco or molybdenum cofactor) to form Mo-molybdopterin guanine dinucleotide (Mo-MGD) cofactor. The sequence is that of Probable molybdenum cofactor guanylyltransferase from Bacillus cereus (strain Q1).